The sequence spans 229 residues: Ribonuclease 3 (229 aa).

An RNase III domain is found at 5–127 (LSRLERQLGY…LIGAIYLDAG (123 aa)). Glutamate 40 contributes to the Mg(2+) binding site. Aspartate 44 is a catalytic residue. Residues aspartate 113 and glutamate 116 each contribute to the Mg(2+) site. Residue glutamate 116 is part of the active site. A DRBM domain is found at 154–224 (DPKTRLQEFL…AAAALIALGV (71 aa)).

Belongs to the ribonuclease III family. As to quaternary structure, homodimer. The cofactor is Mg(2+).

It is found in the cytoplasm. It carries out the reaction Endonucleolytic cleavage to 5'-phosphomonoester.. Digests double-stranded RNA. Involved in the processing of primary rRNA transcript to yield the immediate precursors to the large and small rRNAs (23S and 16S). Processes some mRNAs, and tRNAs when they are encoded in the rRNA operon. Processes pre-crRNA and tracrRNA of type II CRISPR loci if present in the organism. The sequence is that of Ribonuclease 3 from Pseudomonas syringae pv. tomato (strain ATCC BAA-871 / DC3000).